Reading from the N-terminus, the 350-residue chain is MIQIKNLKKEYRTNNTSNLVLDNINLEIKQGEIFGIIGHSGAGKSSLLRCLNLLEQPTDGSIFIADENITKKNSKQLREFRKKVAMIFQHFNLLSSRNVFENIALPLEIQGIPKSEIKKRVFELLDLVELPNKANAYPQELSGGQKQKVAIARALALNPLVLLSDEATSALDPTSTKQILALLKILNKELGLTIVLITHEIDVVRKICDRVAIIDKGRIAEMGKTLDVFLNPQAPVTRSFVETSIHTKVPDFIAKKLQDNPYSYDNTYPVVQLTFYGDKGKMPIIAEISRQFNATASIIQANIETIQDQIVGIAICHITGERQGWENALRFLSNQDVNLKVLGYATADNI.

Positions 2–241 constitute an ABC transporter domain; sequence IQIKNLKKEY…PQAPVTRSFV (240 aa). 38–45 serves as a coordination point for ATP; it reads GHSGAGKS.

The protein belongs to the ABC transporter superfamily. Methionine importer (TC 3.A.1.24) family. The complex is composed of two ATP-binding proteins (MetN), two transmembrane proteins (MetI) and a solute-binding protein (MetQ).

The protein resides in the cell inner membrane. The catalysed reaction is L-methionine(out) + ATP + H2O = L-methionine(in) + ADP + phosphate + H(+). It carries out the reaction D-methionine(out) + ATP + H2O = D-methionine(in) + ADP + phosphate + H(+). Part of the ABC transporter complex MetNIQ involved in methionine import. Responsible for energy coupling to the transport system. The polypeptide is Methionine import ATP-binding protein MetN (Francisella tularensis subsp. tularensis (strain FSC 198)).